The primary structure comprises 559 residues: CTP synthase (559 aa).

An amidoligase domain region spans residues M1–L283. A CTP-binding site is contributed by S25. S25 contacts UTP. Residues S26–L31 and D83 contribute to the ATP site. Mg(2+)-binding residues include D83 and E157. CTP is bound by residues D164–E166, K204–Q209, and K240. Residues K204–Q209 and K240 each bind UTP. In terms of domain architecture, Glutamine amidotransferase type-1 spans T308–T557. L-glutamine is bound at residue G371. The active-site Nucleophile; for glutamine hydrolysis is C398. L-glutamine contacts are provided by residues L399–Q402, E421, and R482. Catalysis depends on residues H530 and E532.

The protein belongs to the CTP synthase family. As to quaternary structure, homotetramer.

The enzyme catalyses UTP + L-glutamine + ATP + H2O = CTP + L-glutamate + ADP + phosphate + 2 H(+). It catalyses the reaction L-glutamine + H2O = L-glutamate + NH4(+). It carries out the reaction UTP + NH4(+) + ATP = CTP + ADP + phosphate + 2 H(+). It functions in the pathway pyrimidine metabolism; CTP biosynthesis via de novo pathway; CTP from UDP: step 2/2. Its activity is regulated as follows. Allosterically activated by GTP, when glutamine is the substrate; GTP has no effect on the reaction when ammonia is the substrate. The allosteric effector GTP functions by stabilizing the protein conformation that binds the tetrahedral intermediate(s) formed during glutamine hydrolysis. Inhibited by the product CTP, via allosteric rather than competitive inhibition. Its function is as follows. Catalyzes the ATP-dependent amination of UTP to CTP with either L-glutamine or ammonia as the source of nitrogen. Regulates intracellular CTP levels through interactions with the four ribonucleotide triphosphates. This chain is CTP synthase, found in Corynebacterium efficiens (strain DSM 44549 / YS-314 / AJ 12310 / JCM 11189 / NBRC 100395).